The following is a 361-amino-acid chain: Polygalacturonase (361 aa).

An N-terminal signal peptide occupies residues 1-18 (MISANSLLISTLCAFAIA). Cys-27 and Cys-43 are joined by a disulfide. PbH1 repeat units lie at residues 155-185 (CSDL…DVGS), 186-207 (SSNV…AVNS), 208-228 (GSTI…SVGS), 237-258 (VNGF…RIKT), and 266-288 (VTNV…VIEG). Asp-200 serves as the catalytic Proton donor. Cysteines 202 and 218 form a disulfide. His-222 is an active-site residue. Asn-318 and Asn-330 each carry an N-linked (GlcNAc...) asparagine glycan. Cys-350 and Cys-361 are disulfide-bonded.

Belongs to the glycosyl hydrolase 28 family.

It carries out the reaction (1,4-alpha-D-galacturonosyl)n+m + H2O = (1,4-alpha-D-galacturonosyl)n + (1,4-alpha-D-galacturonosyl)m.. The polypeptide is Polygalacturonase (PGU1) (Saccharomyces cerevisiae (strain ATCC 204508 / S288c) (Baker's yeast)).